A 212-amino-acid chain; its full sequence is Ribonuclease HII (212 aa).

An RNase H type-2 domain is found at 2–206 (TPLVGVDEAG…CERIRAEAEQ (205 aa)). Positions 8, 9, and 101 each coordinate a divalent metal cation.

It belongs to the RNase HII family. It depends on Mn(2+) as a cofactor. Mg(2+) is required as a cofactor.

Its subcellular location is the cytoplasm. It catalyses the reaction Endonucleolytic cleavage to 5'-phosphomonoester.. Its function is as follows. Endonuclease that specifically degrades the RNA of RNA-DNA hybrids. The sequence is that of Ribonuclease HII from Natronomonas pharaonis (strain ATCC 35678 / DSM 2160 / CIP 103997 / JCM 8858 / NBRC 14720 / NCIMB 2260 / Gabara) (Halobacterium pharaonis).